Consider the following 293-residue polypeptide: Lymphocyte antigen 6 complex locus protein G6f (293 aa).

The signal sequence occupies residues 1–19 (MAMVVFLLLYLCGHPQAAA). The region spanning 20–124 (DNIQTLYVPS…HKYQNWRVYD (105 aa)) is the Ig-like V-type domain. Over 20–237 (DNIQTLYVPS…APLPSWDVSW (218 aa)) the chain is Extracellular. Cysteine 37 and cysteine 108 form a disulfide bridge. N-linked (GlcNAc...) asparagine glycosylation is present at asparagine 90. Residues 238–258 (ILMLLFAAGQGVTIIALSIVI) form a helical membrane-spanning segment. Over 259–293 (WRHQRAQGTQDREPSIPHFKPEVQVYENIHLARLR) the chain is Cytoplasmic. At tyrosine 284 the chain carries Phosphotyrosine.

In terms of assembly, homodimer; disulfide-linked. Interacts with GRB2 and GRB7 in a phosphorylation-dependent manner. In terms of processing, N-glycosylated.

The protein resides in the cell membrane. Its function is as follows. May play a role in the downstream signal transduction pathways involving GRB2 and GRB7. This Rattus norvegicus (Rat) protein is Lymphocyte antigen 6 complex locus protein G6f (Ly6g6f).